Reading from the N-terminus, the 445-residue chain is Selenocysteine lyase (445 aa).

Residue M1 is modified to N-acetylmethionine. Residues 1 to 28 (MEAAVAPGRDAPAPAASQPSGCGKHNSP) are disordered. Residue S129 is modified to Phosphoserine. At K259 the chain carries N6-(pyridoxal phosphate)lysine. C388 (S-selanylcysteine intermediate) is an active-site residue.

Belongs to the class-V pyridoxal-phosphate-dependent aminotransferase family. In terms of assembly, homodimer. Requires pyridoxal 5'-phosphate as cofactor.

The protein resides in the cytoplasm. It is found in the cytosol. The catalysed reaction is L-selenocysteine + AH2 = hydrogenselenide + L-alanine + A + H(+). In terms of biological role, catalyzes the decomposition of L-selenocysteine to L-alanine and elemental selenium. The chain is Selenocysteine lyase (SCLY) from Homo sapiens (Human).